Reading from the N-terminus, the 275-residue chain is 5'-nucleotidase SurE (275 aa).

A divalent metal cation contacts are provided by aspartate 12, aspartate 13, serine 44, and asparagine 102.

This sequence belongs to the SurE nucleotidase family. Requires a divalent metal cation as cofactor.

It localises to the cytoplasm. It carries out the reaction a ribonucleoside 5'-phosphate + H2O = a ribonucleoside + phosphate. In terms of biological role, nucleotidase that shows phosphatase activity on nucleoside 5'-monophosphates. In Synechococcus sp. (strain RCC307), this protein is 5'-nucleotidase SurE.